The primary structure comprises 127 residues: S1-like domain-containing protein C146.08c (127 aa).

Residues 10–86 enclose the S1-like domain; that stretch reads SFDPPARLEK…NKIDGTILYV (77 aa). The disordered stretch occupies residues 107-127; sequence ESLNQNDSEESSSSEEEYDSD. Acidic residues predominate over residues 113–127; it reads DSEESSSSEEEYDSD. The residue at position 124 (Y124) is a Phosphotyrosine. Residue S126 is modified to Phosphoserine.

This sequence belongs to the EIF1AD family.

It localises to the cytoplasm. The protein resides in the nucleus. The chain is S1-like domain-containing protein C146.08c from Schizosaccharomyces pombe (strain 972 / ATCC 24843) (Fission yeast).